The following is a 254-amino-acid chain: MTQAFTVVIPARYASTRLPGKPLQDIAGQPMIQRVWNQARKSAASRVVVATDDERILAACQGFGAEALLTRAEHNSGTDRLEEVASRLGLASDAIVVNVQGDEPLIPPALIDQVAANLAAHPEAAIATLAEPIHEVSALFNPNVVKVATDIDGLALTFSRAPLPWARDAFARDRDSLPEGVPYRRHIGIYAYRVGFLADFVAWGPCWLENAESLEQLRALWHGVRIHVADARETMLPGVDTPEDLERVRRVLGG.

The protein belongs to the KdsB family.

Its subcellular location is the cytoplasm. The catalysed reaction is 3-deoxy-alpha-D-manno-oct-2-ulosonate + CTP = CMP-3-deoxy-beta-D-manno-octulosonate + diphosphate. It functions in the pathway nucleotide-sugar biosynthesis; CMP-3-deoxy-D-manno-octulosonate biosynthesis; CMP-3-deoxy-D-manno-octulosonate from 3-deoxy-D-manno-octulosonate and CTP: step 1/1. It participates in bacterial outer membrane biogenesis; lipopolysaccharide biosynthesis. Activates KDO (a required 8-carbon sugar) for incorporation into bacterial lipopolysaccharide in Gram-negative bacteria. The protein is 3-deoxy-manno-octulosonate cytidylyltransferase of Pseudomonas aeruginosa (strain LESB58).